The following is a 1685-amino-acid chain: PHD and RING finger domain-containing protein 1 (1685 aa).

The disordered stretch occupies residues methionine 1 to glutamate 82. Over residues aspartate 41–isoleucine 81 the composition is skewed to acidic residues. An RING-type; degenerate zinc finger spans residues cysteine 109 to arginine 150. The PHD-type zinc finger occupies proline 188–proline 238. Disordered regions lie at residues proline 333–asparagine 390, aspartate 449–proline 483, serine 537–cysteine 590, threonine 606–phenylalanine 777, and lysine 809–serine 860. Threonine 335 bears the Phosphothreonine mark. Basic residues-rich tracts occupy residues proline 339–valine 364 and arginine 372–lysine 387. 2 positions are modified to phosphoserine: serine 450 and serine 460. Composition is skewed to polar residues over residues threonine 606 to serine 625 and serine 637 to serine 662. Residues glutamine 671–lysine 682 show a composition bias toward basic and acidic residues. Polar residues-rich tracts occupy residues serine 694 to glutamate 709 and serine 737 to serine 751. Residues serine 817, serine 848, serine 849, serine 867, serine 870, serine 922, serine 948, serine 984, and serine 1002 each carry the phosphoserine modification. Positions proline 835 to serine 860 are enriched in low complexity. 3 disordered regions span residues glycine 892 to valine 1229, glutamine 1290 to aspartate 1355, and threonine 1369 to glycine 1390. The segment covering serine 922–proline 934 has biased composition (acidic residues). A compositionally biased stretch (low complexity) spans serine 1001–serine 1010. Basic residues-rich tracts occupy residues arginine 1011 to serine 1031 and lysine 1054 to arginine 1064. A compositionally biased stretch (basic and acidic residues) spans serine 1065–arginine 1075. 2 stretches are compositionally biased toward basic residues: residues glycine 1089–serine 1102 and serine 1117–serine 1129. Composition is skewed to basic and acidic residues over residues arginine 1130 to aspartate 1143 and arginine 1151 to serine 1165. Phosphoserine is present on residues serine 1135 and serine 1139. The span at arginine 1181–histidine 1191 shows a compositional bias: basic residues. Residues proline 1192–valine 1201 are compositionally biased toward basic and acidic residues. The residue at position 1205 (serine 1205) is a Phosphoserine. Over residues aspartate 1292–serine 1305 the composition is skewed to low complexity. Serine 1372 and serine 1383 each carry phosphoserine. Threonine 1416 is subject to Phosphothreonine. Disordered stretches follow at residues glutamate 1421–tryptophan 1448, leucine 1466–leucine 1501, and leucine 1569–threonine 1591. Positions serine 1577–threonine 1591 are enriched in basic and acidic residues. The stretch at glutamate 1589–lysine 1615 forms a coiled coil.

In terms of assembly, interacts with POLR2A (via the C-terminal domain).

This is PHD and RING finger domain-containing protein 1 from Rattus norvegicus (Rat).